We begin with the raw amino-acid sequence, 226 residues long: ATP synthase F(0) complex subunit a (226 aa).

5 consecutive transmembrane segments (helical) span residues 9-29, 68-88, 97-117, 138-158, and 184-204; these read FITP…FPSL, WTLM…LGLL, QLSM…ITGF, IPML…ALAV, and ISPT…ILEF.

It belongs to the ATPase A chain family. As to quaternary structure, component of the ATP synthase complex composed at least of ATP5F1A/subunit alpha, ATP5F1B/subunit beta, ATP5MC1/subunit c (homooctomer), MT-ATP6/subunit a, MT-ATP8/subunit 8, ATP5ME/subunit e, ATP5MF/subunit f, ATP5MG/subunit g, ATP5MK/subunit k, ATP5MJ/subunit j, ATP5F1C/subunit gamma, ATP5F1D/subunit delta, ATP5F1E/subunit epsilon, ATP5PF/subunit F6, ATP5PB/subunit b, ATP5PD/subunit d, ATP5PO/subunit OSCP. ATP synthase complex consists of a soluble F(1) head domain (subunits alpha(3) and beta(3)) - the catalytic core - and a membrane F(0) domain - the membrane proton channel (subunits c, a, 8, e, f, g, k and j). These two domains are linked by a central stalk (subunits gamma, delta, and epsilon) rotating inside the F1 region and a stationary peripheral stalk (subunits F6, b, d, and OSCP). Interacts with DNAJC30; interaction is direct.

It is found in the mitochondrion inner membrane. The catalysed reaction is H(+)(in) = H(+)(out). Functionally, subunit a, of the mitochondrial membrane ATP synthase complex (F(1)F(0) ATP synthase or Complex V) that produces ATP from ADP in the presence of a proton gradient across the membrane which is generated by electron transport complexes of the respiratory chain. ATP synthase complex consist of a soluble F(1) head domain - the catalytic core - and a membrane F(1) domain - the membrane proton channel. These two domains are linked by a central stalk rotating inside the F(1) region and a stationary peripheral stalk. During catalysis, ATP synthesis in the catalytic domain of F(1) is coupled via a rotary mechanism of the central stalk subunits to proton translocation. With the subunit c (ATP5MC1), forms the proton-conducting channel in the F(0) domain, that contains two crucial half-channels (inlet and outlet) that facilitate proton movement from the mitochondrial intermembrane space (IMS) into the matrix. Protons are taken up via the inlet half-channel and released through the outlet half-channel, following a Grotthuss mechanism. This chain is ATP synthase F(0) complex subunit a, found in Capra hircus (Goat).